Here is a 398-residue protein sequence, read N- to C-terminus: Elongation factor Tu (398 aa).

Residues 10-207 (KPHVNIGTIG…TVDSYIPEPE (198 aa)) enclose the tr-type G domain. Positions 19-26 (GHVDHGKT) are G1. Residue 19-26 (GHVDHGKT) participates in GTP binding. Mg(2+) is bound at residue T26. The G2 stretch occupies residues 63 to 67 (GITIN). The segment at 84-87 (DAPG) is G3. Residues 84 to 88 (DAPGH) and 139 to 142 (NKVD) contribute to the GTP site. Residues 139–142 (NKVD) form a G4 region. Residues 177–179 (SAL) are G5.

Belongs to the TRAFAC class translation factor GTPase superfamily. Classic translation factor GTPase family. EF-Tu/EF-1A subfamily. Monomer.

It localises to the cytoplasm. It catalyses the reaction GTP + H2O = GDP + phosphate + H(+). GTP hydrolase that promotes the GTP-dependent binding of aminoacyl-tRNA to the A-site of ribosomes during protein biosynthesis. This chain is Elongation factor Tu, found in Streptococcus pyogenes serotype M1.